The sequence spans 480 residues: F-box only protein 3 (480 aa).

Positions 10 to 56 (LLTLESLPTDPLLLILSFVDYRDLINCCYVSRRLSQLSTHDPLWRRH) constitute an F-box domain. Residues 278-408 (VATTGDITVS…FHMACPTFRV (131 aa)) form the ApaG domain. The segment covering 419–458 (EYEEMEEEAEEEEEEENDDSADMDESDESDADENESDEGE) has biased composition (acidic residues). The segment at 419-463 (EYEEMEEEAEEEEEEENDDSADMDESDESDADENESDEGEGEARR) is disordered.

Part of a SCF (SKP1-cullin-F-box) protein ligase complex SCF(FBXO3) consisting of FBXO3, SKP1, CUL1 and RBX1. Interacts with PML, interaction is direct and takes place either alone or within the SCF complex.

The protein resides in the nucleus. Its pathway is protein modification; protein ubiquitination. Its function is as follows. Substrate recognition component of the SCF (SKP1-CUL1-F-box protein)-type E3 ubiquitin ligase complex, SCF(FBXO3), which mediates the ubiquitination and subsequent proteasomal degradation of target proteins. Mediates the ubiquitination of HIPK2 and probably that of EP300, leading to rapid degradation by the proteasome. In the presence of PML, HIPK2 ubiquitination still occurs, but degradation is prevented. PML, HIPK2 and FBXO3 may act synergically to activate p53/TP53-dependent transactivation. The SCF(FBXO3) also acts as a regulator of inflammation by mediating ubiquitination and degradation of FBXL2: specifically recognizes FBXL2 phosphorylated at 'Thr-404' and promotes its ubiquitination. The protein is F-box only protein 3 (Fbxo3) of Mus musculus (Mouse).